A 138-amino-acid chain; its full sequence is PTS system sorbose-specific EIIA component (138 aa).

The region spanning 1 to 125 is the PTS EIIA type-4 domain; the sequence is MEIILVGHAH…KIKEEFSTSL (125 aa). The active-site Tele-phosphohistidine intermediate is His8. His8 is modified (phosphohistidine; by HPr).

It is found in the cytoplasm. In terms of biological role, the phosphoenolpyruvate-dependent sugar phosphotransferase system (PTS), a major carbohydrate active transport system, catalyzes the phosphorylation of incoming sugar substrates concomitant with their translocation across the cell membrane. The enzyme II SorABCD PTS system is involved in L-sorbose transport. The protein is PTS system sorbose-specific EIIA component of Lacticaseibacillus casei (Lactobacillus casei).